Reading from the N-terminus, the 320-residue chain is Polynucleotide 5'-triphosphatase CTL1 (320 aa).

Positions 1–12 are enriched in polar residues; sequence MSDQPETPSNSR. The disordered stretch occupies residues 1–23; sequence MSDQPETPSNSRNSHENVGAKKA. Over residues 13–23 the composition is skewed to basic and acidic residues; sequence NSHENVGAKKA.

This sequence belongs to the fungal TPase family. Mg(2+) is required as a cofactor. The cofactor is Mn(2+).

Its subcellular location is the cytoplasm. It is found in the nucleus. It catalyses the reaction a 5'-end triphospho-ribonucleoside in mRNA + H2O = a 5'-end diphospho-ribonucleoside in mRNA + phosphate + H(+). Its function is as follows. Probably involved in an RNA processing event other than mRNA capping. Releases gamma-phosphate from the 5'-end of RNA to produce a diphosphate terminus. In Saccharomyces cerevisiae (strain ATCC 204508 / S288c) (Baker's yeast), this protein is Polynucleotide 5'-triphosphatase CTL1.